A 460-amino-acid polypeptide reads, in one-letter code: NADH-quinone oxidoreductase subunit N (460 aa).

Transmembrane regions (helical) follow at residues 2 to 22, 28 to 48, 65 to 85, 104 to 124, 155 to 175, 196 to 216, 230 to 250, 263 to 283, 292 to 312, 321 to 341, 363 to 383, 400 to 420, and 438 to 458; these read LLPE…AVML, IVAN…LKYS, ANIA…MIIY, ILLS…LLLF, FILG…IYGF, LGLV…LSSA, PIAS…AILL, ISYN…ALGA, LMAY…LLRT, LYML…IMLL, IAAA…LAGF, LLAY…LKII, and YGLL…SFII.

The protein belongs to the complex I subunit 2 family. In terms of assembly, NDH-1 is composed of 14 different subunits. Subunits NuoA, H, J, K, L, M, N constitute the membrane sector of the complex.

Its subcellular location is the cell inner membrane. The enzyme catalyses a quinone + NADH + 5 H(+)(in) = a quinol + NAD(+) + 4 H(+)(out). Functionally, NDH-1 shuttles electrons from NADH, via FMN and iron-sulfur (Fe-S) centers, to quinones in the respiratory chain. The immediate electron acceptor for the enzyme in this species is believed to be ubiquinone. Couples the redox reaction to proton translocation (for every two electrons transferred, four hydrogen ions are translocated across the cytoplasmic membrane), and thus conserves the redox energy in a proton gradient. The chain is NADH-quinone oxidoreductase subunit N from Rickettsia bellii (strain RML369-C).